A 593-amino-acid chain; its full sequence is Numb-related protein 1 (593 aa).

Disordered stretches follow at residues 1–97, 235–278, 331–375, and 493–581; these read MSAS…WQPD, TAQV…NSRS, LRQG…FGTQ, and MSMS…DPFD. Phosphoserine; by PKC is present on serine 17. The segment covering 27–37 has biased composition (polar residues); it reads QNSLVSEQQPS. Residues 64-74 show a composition bias toward basic residues; it reads RSLRLPKKRRD. Serine 65 bears the Phosphoserine; by PKC mark. Residues 102–255 form the PID domain; that stretch reads RTGTCCFNVK…STSSTPPKDI (154 aa). Polar residues-rich tracts occupy residues 236-251, 261-278, and 354-364; these read AQVNVQSAQESTSSTP, EDNTSEGTSTQNPSNSRS, and SLRTVSNNPTE. Residues 493–511 show a composition bias toward low complexity; that stretch reads MSMSPTSPSSDPPSTSSYS. The span at 516-528 shows a compositional bias: pro residues; that stretch reads SGPPPAHAPPPLP. Positions 532 to 565 are enriched in polar residues; it reads AVSNGSPSIYQQQLQQANSTRNSPAGINWNSSPN.

In terms of assembly, interacts with pkc-3. Expressed in cells comprising the intestine, pharyngeal cells, the anal sphincter and depressor muscles.

It is found in the cytoplasm. Its subcellular location is the cell cortex. The protein localises to the cytoskeleton. It localises to the membrane. In terms of biological role, involved in the tethering and targeting of pkc-3 to modulate the intracellular distribution of the kinase. The complex formed with pkc-3 complexes are likely to be involved in assembly, maintenance, and/or regulation of protein complexes that execute asymmetric and/or polarized cell functions. The chain is Numb-related protein 1 from Caenorhabditis elegans.